The following is a 185-amino-acid chain: Ribosome-recycling factor (185 aa).

Belongs to the RRF family.

It localises to the cytoplasm. Responsible for the release of ribosomes from messenger RNA at the termination of protein biosynthesis. May increase the efficiency of translation by recycling ribosomes from one round of translation to another. The polypeptide is Ribosome-recycling factor (Corynebacterium aurimucosum (strain ATCC 700975 / DSM 44827 / CIP 107346 / CN-1) (Corynebacterium nigricans)).